Here is a 364-residue protein sequence, read N- to C-terminus: Chorismate synthase (364 aa).

Arg-48 serves as a coordination point for NADP(+). Residues 131-133, 243-244, Gly-288, 303-307, and Arg-329 contribute to the FMN site; these read RSS, NA, and KPTSS.

The protein belongs to the chorismate synthase family. As to quaternary structure, homotetramer. It depends on FMNH2 as a cofactor.

It catalyses the reaction 5-O-(1-carboxyvinyl)-3-phosphoshikimate = chorismate + phosphate. It participates in metabolic intermediate biosynthesis; chorismate biosynthesis; chorismate from D-erythrose 4-phosphate and phosphoenolpyruvate: step 7/7. Its function is as follows. Catalyzes the anti-1,4-elimination of the C-3 phosphate and the C-6 proR hydrogen from 5-enolpyruvylshikimate-3-phosphate (EPSP) to yield chorismate, which is the branch point compound that serves as the starting substrate for the three terminal pathways of aromatic amino acid biosynthesis. This reaction introduces a second double bond into the aromatic ring system. In Brucella abortus (strain S19), this protein is Chorismate synthase.